We begin with the raw amino-acid sequence, 81 residues long: Photosystem I iron-sulfur center (81 aa).

4Fe-4S ferredoxin-type domains follow at residues 2 to 31 and 39 to 68; these read AHSV…MVPW and IASA…VRVY. Residues Cys-11, Cys-14, Cys-17, Cys-21, Cys-48, Cys-51, Cys-54, and Cys-58 each contribute to the [4Fe-4S] cluster site.

As to quaternary structure, the eukaryotic PSI reaction center is composed of at least 11 subunits. Requires [4Fe-4S] cluster as cofactor.

The protein resides in the plastid. The protein localises to the chloroplast thylakoid membrane. The enzyme catalyses reduced [plastocyanin] + hnu + oxidized [2Fe-2S]-[ferredoxin] = oxidized [plastocyanin] + reduced [2Fe-2S]-[ferredoxin]. Its function is as follows. Apoprotein for the two 4Fe-4S centers FA and FB of photosystem I (PSI); essential for photochemical activity. FB is the terminal electron acceptor of PSI, donating electrons to ferredoxin. The C-terminus interacts with PsaA/B/D and helps assemble the protein into the PSI complex. Required for binding of PsaD and PsaE to PSI. PSI is a plastocyanin/cytochrome c6-ferredoxin oxidoreductase, converting photonic excitation into a charge separation, which transfers an electron from the donor P700 chlorophyll pair to the spectroscopically characterized acceptors A0, A1, FX, FA and FB in turn. In Gracilaria tenuistipitata var. liui (Red alga), this protein is Photosystem I iron-sulfur center.